A 394-amino-acid chain; its full sequence is MTMIKITDLDLTGKRVLIRSDLNVPVKNGVITSNRKIHASLPTIKLALKKSKHVMVTSHLGRPIEGEYNAQFSLQPVVEYLKKQLINRYVKEVRLVKDYLEGVNFMEGELLILENVRFNKGEKKDDEILSKKYAMLCDVFIMDAFGSAHRTQASTHGIGKFVSLACSGLLLQKELEALGKALCNPMRPMVAIVGGSKVSTKLIVLDSLSKVADYLIVGGGIANTFLAAQGKKVGKSLYEEELIPTAKRLLENCDIPILTDVRVSTEFSETAPVTMKAIIDIKDNEQILDLGDESITRILDILNCAKTILWNGPIGVFEFPNFRKGTEMISHAIAKSNAFSIVGGGDTLMAIDLFDISNQISYISTGGGAFLEFIEGKTFPSVKMLEKHALNNMN.

Residues 21 to 23, 59 to 62, Arg-117, and Arg-150 each bind substrate; these read DLN and HLGR. Residues Lys-201, Glu-318, and 344-347 each bind ATP; that span reads GGDT.

The protein belongs to the phosphoglycerate kinase family. Monomer.

The protein localises to the cytoplasm. The enzyme catalyses (2R)-3-phosphoglycerate + ATP = (2R)-3-phospho-glyceroyl phosphate + ADP. It functions in the pathway carbohydrate degradation; glycolysis; pyruvate from D-glyceraldehyde 3-phosphate: step 2/5. The chain is Phosphoglycerate kinase from Blochmanniella pennsylvanica (strain BPEN).